A 141-amino-acid chain; its full sequence is uncharacterized protein (141 aa).

This is an uncharacterized protein from Homo sapiens (Human).